Here is a 196-residue protein sequence, read N- to C-terminus: dTTP/UTP pyrophosphatase (196 aa).

The active-site Proton acceptor is Asp-77.

It belongs to the Maf family. YhdE subfamily. It depends on a divalent metal cation as a cofactor.

The protein resides in the cytoplasm. It carries out the reaction dTTP + H2O = dTMP + diphosphate + H(+). It catalyses the reaction UTP + H2O = UMP + diphosphate + H(+). Its function is as follows. Nucleoside triphosphate pyrophosphatase that hydrolyzes dTTP and UTP. May have a dual role in cell division arrest and in preventing the incorporation of modified nucleotides into cellular nucleic acids. In Christiangramia forsetii (strain DSM 17595 / CGMCC 1.15422 / KT0803) (Gramella forsetii), this protein is dTTP/UTP pyrophosphatase.